The primary structure comprises 187 residues: Glutathione-dependent formaldehyde-activating enzyme (187 aa).

Positions 20-167 constitute a CENP-V/GFA domain; sequence FAGGTLVCKC…LKELGLEPYD (148 aa). Residues cysteine 27, cysteine 29, cysteine 48, cysteine 50, cysteine 53, cysteine 95, and cysteine 98 each coordinate Zn(2+).

Belongs to the Gfa family. Requires Zn(2+) as cofactor.

The enzyme catalyses S-(hydroxymethyl)glutathione = glutathione + formaldehyde. Its pathway is one-carbon metabolism; formaldehyde degradation; formate from formaldehyde (glutathione route): step 1/3. Its function is as follows. Catalyzes the condensation of formaldehyde and glutathione to S-hydroxymethylglutathione. This is Glutathione-dependent formaldehyde-activating enzyme from Bradyrhizobium sp. (strain BTAi1 / ATCC BAA-1182).